The chain runs to 176 residues: Disulfide bond formation protein B (176 aa).

At 1 to 11 (MLQLTTYRNLQ) the chain is on the cytoplasmic side. Residues 12-28 (VFLVIMTAIGMSFALFF) traverse the membrane as a helical segment. Residues 29–46 (LQRYMGFSPCPLCIFQRI) lie on the Periplasmic side of the membrane. A disulfide bridge connects residues Cys38 and Cys41. The chain crosses the membrane as a helical span at residues 47–63 (GLMIMGGFALIAALFHP). The Cytoplasmic portion of the chain corresponds to 64 to 70 (KSMVIRL). Residues 71 to 88 (LLWLGSLAGIGWAAIVAG) form a helical membrane-spanning segment. Over 89-145 (RHVWLQHLPADQVPSCGPGLDYWLDTLPMQQVLKEVFAGSGECASIEWTFLGLSIPE) the chain is Periplasmic. Cys104 and Cys131 are oxidised to a cystine. A helical membrane pass occupies residues 146–164 (QSLILFSILILTHLLILWR). The Cytoplasmic portion of the chain corresponds to 165–176 (IVRPSTPKPLAR).

Belongs to the DsbB family.

The protein localises to the cell inner membrane. Functionally, required for disulfide bond formation in some periplasmic proteins. Acts by oxidizing the DsbA protein. The polypeptide is Disulfide bond formation protein B (Psychrobacter arcticus (strain DSM 17307 / VKM B-2377 / 273-4)).